The following is a 492-amino-acid chain: Protein PAIR1 (492 aa).

Residues 166–186 (VDSVQSDVMQLNRAMKEASLD) adopt a coiled-coil conformation. The Nuclear localization signal motif lies at 479 to 483 (KRRRR).

In terms of assembly, interacts with CRC1. Expressed in reproductive organs, but not in vegetative organs.

It localises to the nucleus. Functionally, involved in spore formation. Plays an essential role in the establishment of homologous chromosome pairing in early meiosis. This Oryza sativa subsp. japonica (Rice) protein is Protein PAIR1 (PAIR1).